A 534-amino-acid chain; its full sequence is Lysophosphatidylcholine acyltransferase 1 (534 aa).

Residues 1–25 form a disordered region; sequence MRLRGRGPRAAPSSSSGAGDARRLA. The Cytoplasmic portion of the chain corresponds to 1–57; the sequence is MRLRGRGPRAAPSSSSGAGDARRLAPPGRNPFVHELRLSALQKAQVAFMTLTLFPIR. Low complexity predominate over residues 8 to 19; the sequence is PRAAPSSSSGAG. A helical; Signal-anchor for type II membrane protein transmembrane segment spans residues 58–78; sequence LLFAAFMMLLAWPFALVASLG. Over 79 to 534 the chain is Lumenal; sequence PPDKEPEQPL…GRKNSCKKVD (456 aa). The HXXXXD motif motif lies at 135–140; it reads HSSYFD. 2 EF-hand domains span residues 379–414 and 451–486; these read PVSDALEDMFSLFDESGGGEIDLREYVVALSVVCRP and ISELTVTDLFQAIDQEERGRITFDDFCGFAEMYPDF. Residues Asp-392, Ser-394, Glu-398, and Glu-403 each contribute to the Ca(2+) site. Residues 531–534 carry the Di-lysine motif motif; the sequence is KKVD.

It belongs to the 1-acyl-sn-glycerol-3-phosphate acyltransferase family. In terms of tissue distribution, enriched in alveolar type II cells of lung. Also highly expressed in stomach.

Its subcellular location is the endoplasmic reticulum membrane. The protein resides in the golgi apparatus membrane. It localises to the cell membrane. The protein localises to the lipid droplet. The enzyme catalyses a 1-acyl-sn-glycero-3-phosphocholine + an acyl-CoA = a 1,2-diacyl-sn-glycero-3-phosphocholine + CoA. The catalysed reaction is a 1-O-alkyl-sn-glycero-3-phosphocholine + acetyl-CoA = a 1-O-alkyl-2-acetyl-sn-glycero-3-phosphocholine + CoA. It catalyses the reaction a 1-acyl-sn-glycero-3-phosphate + an acyl-CoA = a 1,2-diacyl-sn-glycero-3-phosphate + CoA. It carries out the reaction a 1-O-(1Z-alkenyl)-sn-glycero-3-phosphocholine + an acyl-CoA = a 1-O-(1Z-alkenyl)-2-acyl-sn-glycero-3-phosphocholine + CoA. The enzyme catalyses 1-acyl-sn-glycero-3-phospho-(1'-sn-glycerol) + an acyl-CoA = a 1,2-diacyl-sn-glycero-3-phospho-(1'-sn-glycerol) + CoA. The catalysed reaction is a 1-acyl-sn-glycero-3-phosphocholine + hexadecanoyl-CoA = 1-acyl-2-hexadecanoyl-sn-glycero-3-phosphocholine + CoA. It catalyses the reaction a 1-acyl-sn-glycero-3-phosphate + hexadecanoyl-CoA = 1-acyl-2-hexadecanoyl-sn-glycero-3-phosphate + CoA. It carries out the reaction 1-acyl-sn-glycero-3-phospho-(1'-sn-glycerol) + hexadecanoyl-CoA = 1-acyl-2-hexadecanoyl-sn-glycero-3-phospho-(1'-sn-glycerol) + CoA. The enzyme catalyses 1-hexadecanoyl-sn-glycero-3-phosphocholine + hexadecanoyl-CoA = 1,2-dihexadecanoyl-sn-glycero-3-phosphocholine + CoA. The catalysed reaction is 1-O-hexadecyl-sn-glycero-3-phosphocholine + hexadecanoyl-CoA = 1-O-hexadecyl-2-hexadecanoyl-sn-glycero-3-phosphocholine + CoA. It catalyses the reaction a 1-O-(1Z-alkenyl)-sn-glycero-3-phosphocholine + hexadecanoyl-CoA = 1-O-(1Z)-alkenyl-2-hexadecanoyl-sn-glycero-3-phosphocholine + CoA. It carries out the reaction 1-hexadecanoyl-sn-glycero-3-phospho-(1'-sn-glycerol) + hexadecanoyl-CoA = 1,2-dihexadecanoyl-sn-glycero-3-phospho-(1'-sn-glycerol) + CoA. The enzyme catalyses 1-dodecanoyl-sn-glycero-3-phosphocholine + hexadecanoyl-CoA = 1-dodecanoyl-2-hexadecanoyl-sn-glycero-3-phosphocholine + CoA. The catalysed reaction is 1-tetradecanoyl-sn-glycero-3-phosphocholine + hexadecanoyl-CoA = 1-tetradecanoyl-2-hexadecanoyl-sn-glycero-3-phosphocholine + CoA. It catalyses the reaction 1-O-octadecyl-sn-glycero-3-phosphocholine + hexadecanoyl-CoA = 1-O-octadecyl-2-hexadecanoyl-sn-glycero-3-phosphocholine + CoA. It carries out the reaction 1-octadecanoyl-sn-glycero-3-phosphocholine + hexadecanoyl-CoA = 1-octadecanoyl-2-hexadecanoyl-sn-glycero-3-phosphocholine + CoA. The enzyme catalyses 1-(9Z-octadecenoyl)-sn-glycero-3-phosphocholine + hexadecanoyl-CoA = 1-(9Z-octadecenoyl)-2-hexadecanoyl-sn-glycero-3-phosphocholine + CoA. The catalysed reaction is 1-eicosanoyl-sn-glycero-3-phosphocholine + hexadecanoyl-CoA = 1-eicosanoyl-2-hexadecanoyl-sn-glycero-3-phosphocholine + CoA. It catalyses the reaction hexanoyl-CoA + 1-hexadecanoyl-sn-glycero-3-phosphocholine = 1-hexadecanoyl-2-hexanoyl-sn-glycero-3-phosphocholine + CoA. It carries out the reaction octanoyl-CoA + 1-hexadecanoyl-sn-glycero-3-phosphocholine = 1-hexadecanoyl-2-octanoyl-sn-glycero-3-phosphocholine + CoA. The enzyme catalyses decanoyl-CoA + 1-hexadecanoyl-sn-glycero-3-phosphocholine = 1-hexadecanoyl-2-decanoyl-sn-glycero-3-phosphocholine + CoA. The catalysed reaction is dodecanoyl-CoA + 1-hexadecanoyl-sn-glycero-3-phosphocholine = 1-hexadecanoyl-2-dodecanoyl-sn-glycero-3-phosphocholine + CoA. It catalyses the reaction tetradecanoyl-CoA + 1-hexadecanoyl-sn-glycero-3-phosphocholine = 1-hexadecanoyl-2-tetradecanoyl-sn-glycero-3-phosphocholine + CoA. It carries out the reaction 1-hexadecanoyl-sn-glycero-3-phosphocholine + (9Z)-octadecenoyl-CoA = 1-hexadecanoyl-2-(9Z-octadecenoyl)-sn-glycero-3-phosphocholine + CoA. The enzyme catalyses (9Z,12Z)-octadecadienoyl-CoA + 1-hexadecanoyl-sn-glycero-3-phosphocholine = 1-hexadecanoyl-2-(9Z,12Z-octadecadienoyl)-sn-glycero-3-phosphocholine + CoA. The catalysed reaction is (4Z,7Z,10Z,13Z,16Z,19Z)-docosahexaenoyl-CoA + 1-hexadecanoyl-sn-glycero-3-phosphocholine = 1-hexadecanoyl-2-(4Z,7Z,10Z,13Z,16Z,19Z-docosahexaenoyl)-sn-glycero-3-phosphocholine + CoA. It catalyses the reaction 1-hexadecanoyl-sn-glycero-3-phosphocholine + acetyl-CoA = 1-hexadecanoyl-2-acetyl-sn-glycero-3-phosphocholine + CoA. It carries out the reaction eicosanoyl-CoA + 1-hexadecanoyl-sn-glycero-3-phosphocholine = 1-hexadecanoyl-2-eicosanoyl-sn-glycero-3-phosphocholine + CoA. The enzyme catalyses 1-O-hexadecyl-sn-glycero-3-phosphocholine + acetyl-CoA = 1-O-hexadecyl-2-acetyl-sn-glycero-3-phosphocholine + CoA. It participates in lipid metabolism; phospholipid metabolism. With respect to regulation, activity is stimulated by Mg(2+) or Mn(2+). Exhibits acyltransferase activity. Exhibits acetyltransferase activity. Activity is calcium-independent. Catalyzes the conversion of lysophosphatidylcholine (1-acyl-sn-glycero-3-phosphocholine or LPC) into phosphatidylcholine (1,2-diacyl-sn-glycero-3-phosphocholine or PC). Catalyzes the conversion 1-acyl-sn-glycerol-3-phosphate (lysophosphatidic acid or LPA) into 1,2-diacyl-sn-glycerol-3-phosphate (phosphatidic acid or PA) by incorporating an acyl moiety at the sn-2 position of the glycerol backbone. Displays a clear preference for saturated fatty acyl-CoAs, and 1-myristoyl or 1-palmitoyl LPC as acyl donors and acceptors, respectively. Involved in platelet-activating factor (PAF) biosynthesis by catalyzing the conversion of the PAF precursor, 1-O-alkyl-sn-glycero-3-phosphocholine (lyso-PAF) into 1-O-alkyl-2-acetyl-sn-glycero-3-phosphocholine (PAF). May synthesize phosphatidylcholine in pulmonary surfactant, thereby playing a pivotal role in respiratory physiology. Involved in the regulation of lipid droplet number and size. The protein is Lysophosphatidylcholine acyltransferase 1 (Lpcat1) of Rattus norvegicus (Rat).